The primary structure comprises 350 residues: ATPase GET3 (350 aa).

ATP is bound at residue 26–33 (KGGVGKTT). Residue D57 is part of the active site. Residues E243 and N270 each contribute to the ATP site. The Zn(2+) site is built by C282 and C285.

Belongs to the arsA ATPase family. Homodimer. Component of the Golgi to ER traffic (GET) complex, which is composed of GET1, GET2 and GET3. Within the complex, GET1 and GET2 form a heterotetramer which is stabilized by phosphatidylinositol binding and which binds to the GET3 homodimer. Interacts with the chloride channel protein GEF1.

It localises to the cytoplasm. Its subcellular location is the endoplasmic reticulum. The protein localises to the golgi apparatus. Its function is as follows. ATPase required for the post-translational delivery of tail-anchored (TA) proteins to the endoplasmic reticulum. Recognizes and selectively binds the transmembrane domain of TA proteins in the cytosol. This complex then targets to the endoplasmic reticulum by membrane-bound receptors GET1 and GET2, where the tail-anchored protein is released for insertion. This process is regulated by ATP binding and hydrolysis. ATP binding drives the homodimer towards the closed dimer state, facilitating recognition of newly synthesized TA membrane proteins. ATP hydrolysis is required for insertion. Subsequently, the homodimer reverts towards the open dimer state, lowering its affinity for the GET1-GET2 receptor, and returning it to the cytosol to initiate a new round of targeting. Cooperates with the HDEL receptor ERD2 to mediate the ATP-dependent retrieval of resident ER proteins that contain a C-terminal H-D-E-L retention signal from the Golgi to the ER. Involved in low-level resistance to the oxyanions arsenite and arsenate, and in heat tolerance. The polypeptide is ATPase GET3 (Candida albicans (strain SC5314 / ATCC MYA-2876) (Yeast)).